We begin with the raw amino-acid sequence, 436 residues long: Chorismate synthase, chloroplastic (436 aa).

The disordered stretch occupies residues 1–24 (MASSSLTSKSILGSTKLGSSSLPS). A chloroplast-targeting transit peptide spans 1–50 (MASSSLTSKSILGSTKLGSSSLPSELRRLSSPAVQISLRTQTRKNFQIQA).

The protein belongs to the chorismate synthase family. In terms of assembly, homotetramer. The cofactor is FMNH2.

It localises to the plastid. The protein resides in the chloroplast. It catalyses the reaction 5-O-(1-carboxyvinyl)-3-phosphoshikimate = chorismate + phosphate. Its pathway is metabolic intermediate biosynthesis; chorismate biosynthesis; chorismate from D-erythrose 4-phosphate and phosphoenolpyruvate: step 7/7. Functionally, catalyzes the last common step of the biosynthesis of aromatic amino acids, produced via the shikimic acid pathway. The protein is Chorismate synthase, chloroplastic (EMB1144) of Arabidopsis thaliana (Mouse-ear cress).